The chain runs to 456 residues: Bifunctional protein GlmU (456 aa).

The tract at residues 1-228 (MPQNTLNIVI…SHLAAGVNNK (228 aa)) is pyrophosphorylase. UDP-N-acetyl-alpha-D-glucosamine is bound by residues 11–14 (LAAG), K25, Q75, 80–81 (GT), 102–104 (YGD), G138, E153, N168, and N226. Residue D104 participates in Mg(2+) binding. N226 contacts Mg(2+). The interval 229 to 249 (LQLAELERIFQTEQAQELLKA) is linker. The interval 250 to 456 (GVTLRDPARF…GWVRPEKNKQ (207 aa)) is N-acetyltransferase. UDP-N-acetyl-alpha-D-glucosamine-binding residues include R332 and K350. H362 acts as the Proton acceptor in catalysis. UDP-N-acetyl-alpha-D-glucosamine is bound by residues Y365 and N376. Acetyl-CoA contacts are provided by residues A379, 385 to 386 (NY), S404, A422, and R439.

This sequence in the N-terminal section; belongs to the N-acetylglucosamine-1-phosphate uridyltransferase family. In the C-terminal section; belongs to the transferase hexapeptide repeat family. As to quaternary structure, homotrimer. The cofactor is Mg(2+).

It localises to the cytoplasm. It catalyses the reaction alpha-D-glucosamine 1-phosphate + acetyl-CoA = N-acetyl-alpha-D-glucosamine 1-phosphate + CoA + H(+). It carries out the reaction N-acetyl-alpha-D-glucosamine 1-phosphate + UTP + H(+) = UDP-N-acetyl-alpha-D-glucosamine + diphosphate. It participates in nucleotide-sugar biosynthesis; UDP-N-acetyl-alpha-D-glucosamine biosynthesis; N-acetyl-alpha-D-glucosamine 1-phosphate from alpha-D-glucosamine 6-phosphate (route II): step 2/2. It functions in the pathway nucleotide-sugar biosynthesis; UDP-N-acetyl-alpha-D-glucosamine biosynthesis; UDP-N-acetyl-alpha-D-glucosamine from N-acetyl-alpha-D-glucosamine 1-phosphate: step 1/1. The protein operates within bacterial outer membrane biogenesis; LPS lipid A biosynthesis. Catalyzes the last two sequential reactions in the de novo biosynthetic pathway for UDP-N-acetylglucosamine (UDP-GlcNAc). The C-terminal domain catalyzes the transfer of acetyl group from acetyl coenzyme A to glucosamine-1-phosphate (GlcN-1-P) to produce N-acetylglucosamine-1-phosphate (GlcNAc-1-P), which is converted into UDP-GlcNAc by the transfer of uridine 5-monophosphate (from uridine 5-triphosphate), a reaction catalyzed by the N-terminal domain. In Neisseria meningitidis serogroup A / serotype 4A (strain DSM 15465 / Z2491), this protein is Bifunctional protein GlmU.